A 270-amino-acid polypeptide reads, in one-letter code: Phosphatidylglycerol--prolipoprotein diacylglyceryl transferase (270 aa).

A run of 4 helical transmembrane segments spans residues 19–39, 53–73, 92–112, and 117–137; these read FPVYWYGIIIGTGVLLGLWLA, FVDLVLFAVPIAIICARAYYV, QGGLAIHGGLIGAVMTGIIYA, and ISFWKLADIAAPSILLGQAIG. R138 is a binding site for a 1,2-diacyl-sn-glycero-3-phospho-(1'-sn-glycerol). Helical transmembrane passes span 178–198, 206–226, and 236–256; these read HPTFLYESLWSFAGVILLLLL, GELFFTYLIWYSIGRFFVEEL, and LRIAQVMSIGLIVISIIFIIV.

It belongs to the Lgt family.

It localises to the cell membrane. It carries out the reaction L-cysteinyl-[prolipoprotein] + a 1,2-diacyl-sn-glycero-3-phospho-(1'-sn-glycerol) = an S-1,2-diacyl-sn-glyceryl-L-cysteinyl-[prolipoprotein] + sn-glycerol 1-phosphate + H(+). It participates in protein modification; lipoprotein biosynthesis (diacylglyceryl transfer). Functionally, catalyzes the transfer of the diacylglyceryl group from phosphatidylglycerol to the sulfhydryl group of the N-terminal cysteine of a prolipoprotein, the first step in the formation of mature lipoproteins. The sequence is that of Phosphatidylglycerol--prolipoprotein diacylglyceryl transferase from Bacillus cytotoxicus (strain DSM 22905 / CIP 110041 / 391-98 / NVH 391-98).